The primary structure comprises 888 residues: E3 ubiquitin-protein ligase SH3RF1 (888 aa).

The RING-type zinc-finger motif lies at 12–53; that stretch reads CPVCLERLDASAKVLPCQHTFCKRCLLGIVGSRNELRCPECR. The segment covering 108–127 has biased composition (polar residues); it reads SSKDLQSSQGGQQPRVQSWS. A disordered region spans residues 108-128; it reads SSKDLQSSQGGQQPRVQSWSP. SH3 domains follow at residues 134–193 and 196–259; these read PQLP…IIKP and QPPP…FNSA. The disordered stretch occupies residues 275–321; it reads DAGECSSAAAQSSTAPKHSDTKKNTKKRHSFTSLTMANKSSQASQNR. Residues 292-362 form an interaction with RAC1 region; it reads HSDTKKNTKK…APSQVHISTT (71 aa). Ser304 carries the post-translational modification Phosphoserine. A compositionally biased stretch (polar residues) spans 305–321; that stretch reads FTSLTMANKSSQASQNR. Residues 440-543 are interaction with AKT2; that stretch reads HLRPQTRPSV…STAGGPAQKL (104 aa). Residues 445 to 506 form the SH3 3 domain; it reads TRPSVYVAIY…PGNYVAPVTR (62 aa). Disordered stretches follow at residues 516–548, 620–639, and 684–741; these read VPMS…GNGV, SVGL…LMPG, and TVLP…ASPT. Over residues 520 to 535 the composition is skewed to polar residues; the sequence is TAGQTSRGVTMVSPST. Position 532 is a phosphoserine (Ser532). Residues 692–704 show a composition bias toward polar residues; it reads SPDSASSACGNSS. The segment covering 707–718 has biased composition (basic and acidic residues); it reads KPDKDSKKEKKG. The residue at position 735 (Ser735) is a Phosphoserine. An SH3 4 domain is found at 829–888; the sequence is VVCERHRVVVSYPPQSEAELELKEGDIVFVHKKREDGWFKGTLQRNGKTGLFPGSFVENI.

This sequence belongs to the SH3RF family. As to quaternary structure, interacts with RAC1; in a GTP-dependent manner. Interacts with MAP3K10/MLK2 and MAP3K11/MLK3. Interacts with MAPK8IP; this interaction leads to the PJAC complex (POSH-JIP or SH3RF1/MAPK8IP apoptotic complex) with a 1:1 ratio. Interacts with SIAH1. Interacts with HERP1. Probably part of a signaling complex that may contain SH3RF1, MAPK8IP, DLK1, MAP2K4/MKK4, MAP2K7/MKK7, MAPK8/JNK1, MAPK9/JNK2, AKT1 and AKT2. Found in a complex with RAC2, MAP3K7/TAK1, MAP2K7/MKK7, MAPK8IP1/JIP1, MAPK8/JNK1 and MAPK9/JNK2. Found in a complex with RAC1, MAP3K11/MLK3, MAP2K7/MKK7, MAPK8IP1/JIP1 and MAPK8/JNK1. Interacts with SH3RF2. Phosphorylated at Ser-304 by AKT1 and AKT2. When phosphorylated, it has reduced ability to bind Rac. In terms of processing, autoubiquitinated. Ubiquitinated by SH3RF2, leading to proteasome-mediated degradation.

It is found in the cytoplasm. The protein resides in the perinuclear region. It localises to the cell projection. Its subcellular location is the lamellipodium. The protein localises to the golgi apparatus. It is found in the trans-Golgi network. The catalysed reaction is S-ubiquitinyl-[E2 ubiquitin-conjugating enzyme]-L-cysteine + [acceptor protein]-L-lysine = [E2 ubiquitin-conjugating enzyme]-L-cysteine + N(6)-ubiquitinyl-[acceptor protein]-L-lysine.. It functions in the pathway protein modification; protein ubiquitination. In terms of biological role, has E3 ubiquitin-protein ligase activity. In the absence of an external substrate, it can catalyze self-ubiquitination. Stimulates ubiquitination of potassium channel KCNJ1, enhancing it's dynamin-dependent and clathrin-independent endocytosis. Acts as a scaffold protein that coordinates with MAPK8IP1/JIP1 in organizing different components of the JNK pathway, including RAC1 or RAC2, MAP3K11/MLK3 or MAP3K7/TAK1, MAP2K7/MKK7, MAPK8/JNK1 and/or MAPK9/JNK2 into a functional multiprotein complex to ensure the effective activation of the JNK signaling pathway. Regulates the differentiation of CD4(+) and CD8(+) T-cells and promotes T-helper 1 (Th1) cell differentiation. Regulates the activation of MAPK8/JNK1 and MAPK9/JNK2 in CD4(+) T-cells and the activation of MAPK8/JNK1 in CD8(+) T-cells. Plays a crucial role in the migration of neocortical neurons in the developing brain. Controls proper cortical neuronal migration and the formation of proximal cytoplasmic dilation in the leading process (PCDLP) in migratory neocortical neurons by regulating the proper localization of activated RAC1 and F-actin assembly. (Microbial infection) Plays an essential role in the targeting of HIV-1 Gag to the plasma membrane, this function is dependent on it's RING domain, and hence it's E3 ligase activity. The polypeptide is E3 ubiquitin-protein ligase SH3RF1 (SH3RF1) (Homo sapiens (Human)).